Reading from the N-terminus, the 284-residue chain is Steroidogenic acute regulatory protein, mitochondrial (284 aa).

The N-terminal 62 residues, 1 to 62 (MLLATFKLCA…RRSSLLGSQL (62 aa)), are a transit peptide targeting the mitochondrion. S56 and S194 each carry phosphoserine; by PKA. An START domain is found at 66–279 (LYSDQELSYI…LRKRLESSPA (214 aa)).

May interact with TSPO.

The protein resides in the mitochondrion. It catalyses the reaction cholesterol(in) = cholesterol(out). It functions in the pathway steroid metabolism; cholesterol metabolism. Plays a key role in steroid hormone synthesis by enhancing the metabolism of cholesterol into pregnenolone. Mediates the transfer of cholesterol from the outer mitochondrial membrane to the inner mitochondrial membrane where it is cleaved to pregnenolone. In Rattus norvegicus (Rat), this protein is Steroidogenic acute regulatory protein, mitochondrial (Star).